The chain runs to 682 residues: Connectin (682 aa).

Residues 1-24 form the signal peptide; sequence MATLADSAICFLLLSLLLIGACLV. The disordered stretch occupies residues 29-54; the sequence is GRAKDDRRTRGRGSSSGVLSSSSSSS. Residues 40–54 are compositionally biased toward low complexity; sequence RGSSSGVLSSSSSSS. 11 LRR repeats span residues 149–172, 173–196, 199–220, 223–244, 247–268, 271–292, 295–316, 319–342, 343–364, 367–388, and 389–404; these read LREL…IIEP, LKNL…AFAN, FLER…AFAN, RLRE…AFRN, LCER…LFAD, RLTF…IFRG, NLNV…VFAE, SLSE…DGLN, TLKT…LLRG, ALLS…TFQP, and IMDN…LVSD. The LRRCT domain occupies 405–462; it reads NKFICDCRLQWIFELKNRTRHLQLRDSLEDLHCTLQEPKLSHFVDPVPPTILDVLNIG. Positions 503 to 536 are disordered; the sequence is RQALRGQRQFASSAENVVESKMRRRRKRQEEVKE. Alanine 658 carries GPI-anchor amidated alanine lipidation. A propeptide spans 659 to 682 (removed in mature form); the sequence is GANSLAQGMTIIVSLVALMMISRG.

As to expression, predominantly expressed in abdominal and thoracic segment muscle and motorneuron cells.

The protein localises to the cell membrane. Its function is as follows. Cell adhesion protein involved in target recognition during neuromuscular development. Mediates homophilic cellular adhesion. This chain is Connectin (Con), found in Drosophila melanogaster (Fruit fly).